The primary structure comprises 394 residues: NAD(P)H-quinone oxidoreductase subunit H (394 aa).

Belongs to the complex I 49 kDa subunit family. NDH-1 can be composed of about 15 different subunits; different subcomplexes with different compositions have been identified which probably have different functions.

It localises to the cellular thylakoid membrane. It catalyses the reaction a plastoquinone + NADH + (n+1) H(+)(in) = a plastoquinol + NAD(+) + n H(+)(out). It carries out the reaction a plastoquinone + NADPH + (n+1) H(+)(in) = a plastoquinol + NADP(+) + n H(+)(out). In terms of biological role, NDH-1 shuttles electrons from an unknown electron donor, via FMN and iron-sulfur (Fe-S) centers, to quinones in the respiratory and/or the photosynthetic chain. The immediate electron acceptor for the enzyme in this species is believed to be plastoquinone. Couples the redox reaction to proton translocation, and thus conserves the redox energy in a proton gradient. Cyanobacterial NDH-1 also plays a role in inorganic carbon-concentration. The protein is NAD(P)H-quinone oxidoreductase subunit H of Synechococcus sp. (strain CC9311).